A 201-amino-acid polypeptide reads, in one-letter code: MALPWALAVLSLLPLLHAQDPACANFSTSPITNATLDQLSHKWFFTASAFRNPKYKQLVQHTQAAFFYFTAIKEEDTLLLREYITTNNTCFYNSSIVRVQRENGTLSKHDGIRNSVADLLLLRDPGSFLLVFFAGKEQDKGMSFYTDKPKASPEQLEEFYEALTCLGMNKTEVVYTDWTKDLCEPLEKQHEEERKKEKAES.

The first 18 residues, 1–18, serve as a signal peptide directing secretion; the sequence is MALPWALAVLSLLPLLHA. N-linked (GlcNAc...) asparagine glycosylation is found at Asn-25, Asn-33, Asn-87, Asn-93, Asn-103, and Asn-169. Cys-90 and Cys-183 are joined by a disulfide.

Belongs to the calycin superfamily. Lipocalin family.

The protein resides in the secreted. In terms of biological role, functions as a transport protein in the blood stream. Binds various ligands in the interior of its beta-barrel domain. Appears to function in modulating the activity of the immune system during the acute-phase reaction. The chain is Alpha-1-acid glycoprotein (ORM1) from Oryctolagus cuniculus (Rabbit).